The sequence spans 953 residues: Protein ENHANCER OF LHP1 1 (953 aa).

7 WD repeats span residues 15–55 (GGSA…TLPP), 60–99 (HHQDGVTSLALSNDSTLLASGSIDHCVKLYKFPSGEFQTN), 102–143 (RFTL…RVLK), 144–183 (GHKGPVTGLDFHPNGELLASIDTTGTVLCWELQNGVVSFT), 192–232 (GFNT…KLFA), 236–275 (DHLEAICYLTWAPNGKYIATSGLDKQVLLWDVDKKQDIDR), and 277–316 (KFEERICCMSWKPNGNALSVIDAKGRYGVWESLVPSSMLS). 3 disordered regions span residues 347–370 (SESLDDAMGDSDDGESHHTSRKRL), 385–419 (EELNDGSSLPSASEYRKKSHRGHREKQGARSGAFK), and 851–877 (ESKVQNPPASIQTSENTEAVMKSSATK). A compositionally biased stretch (acidic residues) spans 349–359 (SLDDAMGDSDD). The span at 853-877 (KVQNPPASIQTSENTEAVMKSSATK) shows a compositional bias: polar residues. A Nuclear localization signal motif is present at residues 900 to 907 (TKKDKSDD). Residues 919–953 (KNPVNNVNKEDKGQEKEVNQGEARRSSNPFLKSTV) form a disordered region. A compositionally biased stretch (basic and acidic residues) spans 926–943 (NKEDKGQEKEVNQGEARR). Residues 944-953 (SSNPFLKSTV) show a composition bias toward polar residues.

In terms of assembly, interacts with EZA1/SWN, LHP1, SLD5 and CLF in the nucleus. In terms of tissue distribution, expressed in root meristematic zones, initiating lateral roots, young leaves and the shoot apex.

Its subcellular location is the nucleus. Functionally, participates in maintaining the H3K27me3 mark at target genes by interacting with LHP1-PRC2 complexes during replication, thus contributing to H3K27me3 inheritance. The sequence is that of Protein ENHANCER OF LHP1 1 from Arabidopsis thaliana (Mouse-ear cress).